We begin with the raw amino-acid sequence, 173 residues long: Alpha-crystallin A chain (173 aa).

An N-acetylmethionine modification is found at Met-1. Residues 1–63 (MDVTIQHPWF…RTVLDSGVSE (63 aa)) are required for complex formation with BFSP1 and BFSP2. A Deamidated glutamine; partial modification is found at Gln-6. Ser-45 carries the phosphoserine modification. Gln-50 is subject to Deamidated glutamine; partial. The sHSP domain occupies 52–162 (LFRTVLDSGV…GHSERAIPVS (111 aa)). Lys-70 is subject to N6-acetyllysine. At Gln-90 the chain carries Deamidated glutamine; partial. Position 99 is an N6-acetyllysine (Lys-99). A Zn(2+)-binding site is contributed by His-100. Asn-101 is modified (deamidated asparagine; partial). Zn(2+) is bound by residues Glu-102 and His-107. Residue Ser-122 is modified to Phosphoserine. A Deamidated asparagine; partial modification is found at Asn-123. Positions 145–173 (KVQSGLDAGHSERAIPVSREEKPSSAPSS) are disordered. Gln-147 bears the Deamidated glutamine; partial mark. A compositionally biased stretch (basic and acidic residues) spans 153-167 (GHSERAIPVSREEKP). His-154 contacts Zn(2+). Ser-162 carries O-linked (GlcNAc) serine glycosylation.

The protein belongs to the small heat shock protein (HSP20) family. Heteromer composed of three CRYAA and one CRYAB subunits. Inter-subunit bridging via zinc ions enhances stability, which is crucial as there is no protein turn over in the lens. Can also form homodimers and homotetramers (dimers of dimers) which serve as the building blocks of homooligomers. Within homooligomers, the zinc-binding motif is created from residues of 3 different molecules. His-100 and Glu-102 from one molecule are ligands of the zinc ion, and His-107 and His-154 residues from additional molecules complete the site with tetrahedral coordination geometry. Part of a complex required for lens intermediate filament formation composed of BFSP1, BFSP2 and CRYAA. Post-translationally, acetylation at Lys-70 may increase chaperone activity. In terms of processing, undergoes age-dependent proteolytical cleavage at the C-terminus.

The protein resides in the cytoplasm. It is found in the nucleus. Contributes to the transparency and refractive index of the lens. Acts as a chaperone, preventing aggregation of various proteins under a wide range of stress conditions. Required for the correct formation of lens intermediate filaments as part of a complex composed of BFSP1, BFSP2 and CRYAA. This Eulemur fulvus fulvus (Brown lemur) protein is Alpha-crystallin A chain (CRYAA).